We begin with the raw amino-acid sequence, 551 residues long: MAEPVRLGRKRPLPVCPNPLFVRWLTEWRDEAASRGRHTRFVFQKALRSLQRYPLPLRSGKEAKILQHFGDRLCRMLDEKLKQHLASGGDHAPSSPSGKKGASKGPPEQVQDSSMPVPTQPQAGSTSVGYWPAQNSGAREILLQLYREHLNSDGHSFLTKEELLQKCAQKTPRVVPGSSKPWPALRSLLHRNLILGTHRPARYALTPEGLELAQKLAEAEGLSTRHAGFRPEEHHGEDSAVPEALSEPGTTEGAVQQRPLELRPSEYRVLLCVDIGETRGAGHRPEMLRELQRLRVPHTVRKLHVGDFVWVAQETRPRDPERPGELVLDHIVERKRLDDLCSSIIDGRFREQKFRLKRCGLGHRVYLVEEHGSVHNLSLPESTLLQAVTNTQVIDGFFVKRTMDIKESAGYLALLTKGLERLYQGHTLRSRPWGAPGAAESEAKPSTNPLCSLLTFSDFNAEAVKNKAQSVREVFARQLMQVRGLSGEKAAAVVDRYSTPASLLAAYDACATAKEQEMLLSTIKCGRLQRNLGPALSRTLYQLYCSHSPLS.

Disordered regions lie at residues 84–131 (HLAS…VGYW) and 229–259 (FRPE…QQRP). Low complexity predominate over residues 92–107 (APSSPSGKKGASKGPP). The residue at position 95 (Ser95) is a Phosphoserine. Positions 110–131 (VQDSSMPVPTQPQAGSTSVGYW) are enriched in polar residues. The interval 124–244 (GSTSVGYWPA…HGEDSAVPEA (121 aa)) is interaction with BLM. Residues 131–230 (WPAQNSGARE…GLSTRHAGFR (100 aa)) are winged helix domain (WHD); critical for endonuclease activity. The segment covering 229 to 238 (FRPEEHHGED) has biased composition (basic and acidic residues). The region spanning 270–372 (LLCVDIGETR…HRVYLVEEHG (103 aa)) is the ERCC4 domain. Residues Asp274, Glu277, and Asp307 contribute to the active site. Mg(2+)-binding residues include Asp274, Glu277, Asp307, Glu333, and Arg334. Positions 471 to 545 (VREVFARQLM…LSRTLYQLYC (75 aa)) are helix-hairpin-helix (2HhH); involved in DNA recognition and bending.

Belongs to the XPF family. In terms of assembly, part of the heterodimeric DNA structure-specific endonuclease complex MUS81-EME1. Part of the heterodimeric DNA structure-specific endonuclease complex MUS81-EME2. Interacts with BLM; may stimulate the endonuclease activity of MUS81. Interacts with SLX4/BTBD12; this interaction is direct and links the MUS81-EME1 complex to SLX4, which may coordinate the action of the structure-specific endonuclease during DNA repair. Interacts with DCLRE1B/Apollo. Interacts with RECQL5; this interaction stimulates mitotic DNA synthesis. Interacts with CHEK2. Requires Mg(2+) as cofactor. As to expression, expressed highly in testis. Expressed also in bone marrow, brain, thymus and to a lesser extent in heart and skeletal muscle, colon, kidney and spleen.

The protein localises to the nucleus. It localises to the nucleolus. Catalytic subunit of two functionally distinct, structure-specific, heterodimeric DNA endonucleases MUS81-EME1 and MUS81-EME2 that are involved in the maintenance of genome stability. Both endonucleases have essentially the same substrate specificity though MUS81-EME2 is more active than its MUS81-EME1 counterpart. Both cleave 3'-flaps and nicked Holliday junctions, and exhibit limited endonuclease activity with 5' flaps and nicked double-stranded DNAs. MUS81-EME2 which is active during the replication of DNA is more specifically involved in replication fork processing. Replication forks frequently encounter obstacles to their passage, including DNA base lesions, DNA interstrand cross-links, difficult-to-replicate sequences, transcription bubbles, or tightly bound proteins. One mechanism for the restart of a stalled replication fork involves nucleolytic cleavage mediated by the MUS81-EME2 endonuclease. By acting upon the stalled fork, MUS81-EME2 generates a DNA double-strand break (DSB) that can be repaired by homologous recombination, leading to the restoration of an active fork. MUS81-EME2 could also function in telomere maintenance. MUS81-EME1, on the other hand, is active later in the cell cycle and functions in the resolution of mitotic recombination intermediates including the Holliday junctions, the four-way DNA intermediates that form during homologous recombination. The chain is Structure-specific endonuclease subunit MUS81 from Mus musculus (Mouse).